The chain runs to 594 residues: TOX high mobility group box family member 4-B (594 aa).

2 disordered regions span residues 160 to 225 (GTIL…PQKP) and 522 to 545 (ESPP…SPQC). Residues 207–217 (KPKTPKKKKKK) show a composition bias toward basic residues. A Nuclear localization signal motif is present at residues 212–217 (KKKKKK). A DNA-binding region (HMG box) is located at residues 222–290 (PQKPLSAYAL…EYLKALALYK (69 aa)).

Component of the PNUTS-PP1 phosphatase complex.

It localises to the nucleus. It is found in the chromosome. Transcription factor that modulates cell fate reprogramming from the somatic state to the pluripotent and neuronal fate. Also acts as a regulatory component of protein phosphatase 1 (PP1) complexes. Component of the PNUTS-PP1 protein phosphatase complex, a PP1 complex that regulates RNA polymerase II transcription pause-release. PNUTS-PP1 also plays a role in the control of chromatin structure and cell cycle progression during the transition from mitosis into interphase. This is TOX high mobility group box family member 4-B (tox4-b) from Xenopus laevis (African clawed frog).